A 480-amino-acid chain; its full sequence is F-box only protein 3 (480 aa).

The F-box domain maps to 10–56 (LLTLESLPTDPLLLILSFVDYRDLINCCYVSRRLSQLSTHDPLWRRH). One can recognise an ApaG domain in the interval 278 to 408 (VATTGDITVS…FHMACPTFRV (131 aa)). Over residues 419–459 (EYEEMEEEAEEEEEEENDDSADMDESDESDEDENESDEGEG) the composition is skewed to acidic residues. The tract at residues 419 to 464 (EYEEMEEEAEEEEEEENDDSADMDESDESDEDENESDEGEGEERRR) is disordered.

In terms of assembly, part of a SCF (SKP1-cullin-F-box) protein ligase complex SCF(FBXO3) consisting of FBXO3, SKP1, CUL1 and RBX1. Interacts with PML, interaction is direct and takes place either alone or within the SCF complex.

It localises to the nucleus. It functions in the pathway protein modification; protein ubiquitination. Functionally, substrate recognition component of the SCF (SKP1-CUL1-F-box protein)-type E3 ubiquitin ligase complex, SCF(FBXO3), which mediates the ubiquitination and subsequent proteasomal degradation of target proteins. Mediates the ubiquitination of HIPK2 and probably that of EP300, leading to rapid degradation by the proteasome. In the presence of PML, HIPK2 ubiquitination still occurs, but degradation is prevented. PML, HIPK2 and FBXO3 may act synergically to activate p53/TP53-dependent transactivation. The SCF(FBXO3) also acts as a regulator of inflammation by mediating ubiquitination and degradation of FBXL2 in response to lipopolysaccharide (LPS). The SCF(FBXO3) complex specifically recognizes FBXL2 phosphorylated at 'Thr-404' and promotes its ubiquitination. The protein is F-box only protein 3 (Fbxo3) of Rattus norvegicus (Rat).